We begin with the raw amino-acid sequence, 712 residues long: Phosphomethylpyrimidine synthase (712 aa).

The interval 14 to 49 (AIDITAPESTIPNKSKVPNKSAESSQSTVPKAPSRR) is disordered. Positions 20–42 (PESTIPNKSKVPNKSAESSQSTV) are enriched in polar residues. Residues Asn283, Met312, Tyr341, His377, 397 to 399 (SRG), 438 to 441 (DGMR), and Glu477 each bind substrate. A Zn(2+)-binding site is contributed by His481. A substrate-binding site is contributed by Tyr504. Residue His545 coordinates Zn(2+). The [4Fe-4S] cluster site is built by Cys625, Cys628, and Cys633.

The protein belongs to the ThiC family. Homodimer. [4Fe-4S] cluster serves as cofactor.

The enzyme catalyses 5-amino-1-(5-phospho-beta-D-ribosyl)imidazole + S-adenosyl-L-methionine = 4-amino-2-methyl-5-(phosphooxymethyl)pyrimidine + CO + 5'-deoxyadenosine + formate + L-methionine + 3 H(+). The protein operates within cofactor biosynthesis; thiamine diphosphate biosynthesis. Functionally, catalyzes the synthesis of the hydroxymethylpyrimidine phosphate (HMP-P) moiety of thiamine from aminoimidazole ribotide (AIR) in a radical S-adenosyl-L-methionine (SAM)-dependent reaction. This is Phosphomethylpyrimidine synthase from Shewanella putrefaciens (strain CN-32 / ATCC BAA-453).